The following is a 112-amino-acid chain: UPF0145 protein MmarC6_1828 (112 aa).

The protein belongs to the UPF0145 family.

This Methanococcus maripaludis (strain C6 / ATCC BAA-1332) protein is UPF0145 protein MmarC6_1828.